We begin with the raw amino-acid sequence, 328 residues long: Delta-aminolevulinic acid dehydratase (328 aa).

The active-site Schiff-base intermediate with substrate is the Lys200. Residues Arg210 and Lys222 each contribute to the 5-aminolevulinate site. A Mg(2+)-binding site is contributed by Glu238. Lys253 serves as the catalytic Schiff-base intermediate with substrate. 5-aminolevulinate-binding residues include Ser279 and Tyr318.

It belongs to the ALAD family. Homooctamer.

It carries out the reaction 2 5-aminolevulinate = porphobilinogen + 2 H2O + H(+). Its pathway is porphyrin-containing compound metabolism; protoporphyrin-IX biosynthesis; coproporphyrinogen-III from 5-aminolevulinate: step 1/4. Its activity is regulated as follows. Stimulated by magnesium, inhibited by zinc. Catalyzes an early step in the biosynthesis of tetrapyrroles. Binds two molecules of 5-aminolevulinate per subunit, each at a distinct site, and catalyzes their condensation to form porphobilinogen. The sequence is that of Delta-aminolevulinic acid dehydratase (hemB) from Chlorobaculum parvum (strain DSM 263 / NCIMB 8327) (Chlorobium vibrioforme subsp. thiosulfatophilum).